The primary structure comprises 299 residues: Glycine--tRNA ligase alpha subunit (299 aa).

This sequence belongs to the class-II aminoacyl-tRNA synthetase family. As to quaternary structure, tetramer of two alpha and two beta subunits.

Its subcellular location is the cytoplasm. The catalysed reaction is tRNA(Gly) + glycine + ATP = glycyl-tRNA(Gly) + AMP + diphosphate. This Lactiplantibacillus plantarum (strain ATCC BAA-793 / NCIMB 8826 / WCFS1) (Lactobacillus plantarum) protein is Glycine--tRNA ligase alpha subunit.